A 374-amino-acid chain; its full sequence is Guanine nucleotide-binding protein subunit alpha-15 (374 aa).

Positions 41-374 (EELKLLLLGP…ARYLDEINLL (334 aa)) constitute a G-alpha domain. The interval 44–57 (KLLLLGPGESGKST) is G1 motif. Residues 49-56 (GPGESGKS), 183-189 (LRSRMPT), 208-212 (DVGGQ), 277-280 (NKTD), and alanine 346 each bind GTP. Residues serine 56 and threonine 189 each contribute to the Mg(2+) site. A G2 motif region spans residues 181-189 (DVLRSRMPT). Positions 204 to 213 (LRIVDVGGQR) are G3 motif. Residues 273-280 (ILFLNKTD) form a G4 motif region. Residues 344–349 (TCATDT) are G5 motif.

It belongs to the G-alpha family. G(q) subfamily. As to quaternary structure, g proteins are composed of 3 units; alpha, beta and gamma. The alpha chain contains the guanine nucleotide binding site. In terms of tissue distribution, expressed primarily in hematopoietic cells. Coexpressed with EDG6 at the same relative levels in all tissues examined, with the highest levels in adult spleen and lung.

Guanine nucleotide-binding proteins (G proteins) are involved as modulators or transducers in various transmembrane signaling systems. The protein is Guanine nucleotide-binding protein subunit alpha-15 (Gna15) of Mus musculus (Mouse).